Reading from the N-terminus, the 118-residue chain is Non-specific lipid-transfer protein-like 1 (118 aa).

The region spanning 5–113 (SDVIFEEIKE…KLRTILDPKM (109 aa)) is the SCP2 domain.

This chain is Non-specific lipid-transfer protein-like 1 (nlt-1), found in Caenorhabditis elegans.